The chain runs to 435 residues: 26S proteasome regulatory subunit 7 (435 aa).

A compositionally biased stretch (basic and acidic residues) spans 1 to 23 (MPDHLGDDMRKTKKDDTKEEEKN). Residues 1–24 (MPDHLGDDMRKTKKDDTKEEEKNF) are disordered. 218-225 (GPPGTGKT) lines the ATP pocket.

It belongs to the AAA ATPase family.

It is found in the cytoplasm. Its subcellular location is the nucleus. In terms of biological role, the 26S proteasome is involved in the ATP-dependent degradation of ubiquitinated proteins. The regulatory (or ATPase) complex confers ATP dependency and substrate specificity to the 26S complex. This chain is 26S proteasome regulatory subunit 7 (rpt-1), found in Caenorhabditis elegans.